A 416-amino-acid chain; its full sequence is MLQRVNPGHKALADYRSIIRRELYGELQELAGRLRGARVLHINATSFGGGVAEILYTLVPLARDAGLEVEWAIMFGAEPFFNVTKRFHNALQGADYELTIEDRAIYEEYNRRTAQALAESGEEWDIVFVHDPQPALVREFSGGLGEGTRWIWRCHIDTSTPNRQVLDYLWPYIADYDAQVYTMREYTPPGVEMPGLTLIPPAIDPLSPKNMALSRDDASYIVSQFGVDVERPFLLQVSRFDPWKDPLGVIDVYRMVKEEVGEVQLVLVGSMAHDDPEGWDYWYKTVNYAGGDPDIFLFSNLTNVGAIEVNAFQSLADVVIQKSIREGFGLVVSEALWKARPVVASRVGGIPMQITAGGGILIDTIPEAAAACAKLLSDPEFAREMGRRGKEHVRANFLTPRLLRDDLRLFAKLLGV.

Belongs to the glycosyltransferase group 1 family. Glycosyltransferase 4 subfamily. In terms of assembly, homodimer. Mg(2+) serves as cofactor.

The enzyme catalyses an NDP-alpha-D-glucose + D-glucose = alpha,alpha-trehalose + a ribonucleoside 5'-diphosphate + H(+). Inhibited by 20 mM Fe(3+) and Mn(2+). Partially inhibited by Zn(2+) and Ni(2+). Activity is slightly enhanced by 2 mM Fe (3+), Mn (2+), Ca(2+) or Li(+) and by 20 mM Mg(2+), Ca(2+) or Li(+). In terms of biological role, synthesizes trehalose from ADP-glucose and glucose. The reaction is reversible, the equilibrium strongly favors trehalose synthesis. This Rubrobacter xylanophilus (strain DSM 9941 / JCM 11954 / NBRC 16129 / PRD-1) protein is Trehalose synthase.